The following is a 769-amino-acid chain: DNA mismatch repair protein MLH1 (769 aa).

Positions 1–335 are DNA- and ATP-binding; sequence MSLRIKALDA…IANQLHAELS (335 aa). Residues 422 to 441 show a composition bias toward polar residues; that stretch reads EGSSTKRQLSEPKVTNVSHS. The segment at 422-480 is disordered; it reads EGSSTKRQLSEPKVTNVSHSQEAEKLTLNESEQPRDANTINDNDLKDQPKKKQKLGDYK. Ser-441 carries the phosphoserine; by ATM or ATR modification. 2 stretches are compositionally biased toward basic and acidic residues: residues 442 to 456 and 464 to 478; these read QEAE…EQPR and NDLK…KLGD. Residues 501–756 are interaction with PMS1; the sequence is RVPKERVNVN…RHILKDVVEI (256 aa).

This sequence belongs to the DNA mismatch repair MutL/HexB family. Heterodimer of MLH1 and PMS1, called MutLalpha, which is the major MMR MutL activity correcting base-base mismatches as well as IDLs. The heterodimer binds double strand DNA independently of a mismatch with positive cooperativity and has more than one DNA binding site. Forms a ternary complex with either the MSH2-MSH6 (MutSalpha) or the MSH2-MSH3 heterodimer (MutSbeta), which recognize and bind to mismatch DNA. Ternary complex formation is promoted by ATP binding. Heterodimer of MLH1 and MLH3, called MutLbeta, which is involved in correction of a specific subset of IDLs when associated with MutSbeta. Heterodimer of MLH1 and MLH2.

Its subcellular location is the nucleus. Required for DNA mismatch repair (MMR), correcting base-base mismatches and insertion-deletion loops (IDLs) resulting from DNA replication, DNA damage or from recombination events between non-identical sequences during meiosis. Component of different MutL heterodimers that form a ternary complex with the MutS heterodimers, which initially recognize the DNA mismatches. This complex is thought to be responsible for directing the downstream MMR events, including strand discrimination, excision, and resynthesis. Plays a major role in maintaining the genetic stability of simple sequence repeats, the repair of heteroduplex sites present in meiotic recombination intermediates, and the promotion of meiotic crossing-over. This chain is DNA mismatch repair protein MLH1 (MLH1), found in Saccharomyces cerevisiae (strain ATCC 204508 / S288c) (Baker's yeast).